The primary structure comprises 340 residues: Protein arginine N-methyltransferase 6 (340 aa).

The 307-residue stretch at 15–321 (DCEYFQCYSD…DINPRHLRVL (307 aa)) folds into the SAM-dependent MTase PRMT-type domain. Residues H28, R37, G61, E83, and E112 each coordinate S-adenosyl-L-methionine. Active-site residues include E126 and E135.

The protein belongs to the class I-like SAM-binding methyltransferase superfamily. Protein arginine N-methyltransferase family. PRMT6 subfamily.

It localises to the nucleus. The catalysed reaction is L-arginyl-[protein] + 2 S-adenosyl-L-methionine = N(omega),N(omega)-dimethyl-L-arginyl-[protein] + 2 S-adenosyl-L-homocysteine + 2 H(+). Its function is as follows. Arginine methyltransferase that can catalyze the formation of both omega-N monomethylarginine (MMA) and asymmetrical dimethylarginine (aDMA), with a strong preference for the formation of aDMA. Preferentially methylates arginyl residues present in a glycine and arginine-rich domain and displays preference for monomethylated substrates. Specifically mediates the asymmetric dimethylation of histone H3 'Arg-2' to form H3R2me2a. H3R2me2a represents a specific tag for epigenetic transcriptional repression and is mutually exclusive with methylation on histone H3 'Lys-4' (H3K4me2 and H3K4me3). Acts as a transcriptional repressor of various genes such as HOXA2, THBS1 and TP53. Repression of TP53 blocks cellular senescence. Also methylates histone H2A and H4 'Arg-3' (H2AR3me and H4R3me, respectively). Acts as a regulator of DNA base excision during DNA repair by mediating the methylation of DNA polymerase beta (POLB), leading to the stimulation of its polymerase activity by enhancing DNA binding and processivity. Methylates HMGA1. Regulates alternative splicing events. Acts as a transcriptional coactivator of a number of steroid hormone receptors including ESR1, ESR2, PGR and NR3C1. In Xenopus tropicalis (Western clawed frog), this protein is Protein arginine N-methyltransferase 6 (prmt6).